We begin with the raw amino-acid sequence, 364 residues long: Caveolae-associated protein 4 (364 aa).

The segment at 1 to 24 (MEHNGSASNADKIHQNRLSSVTED) is disordered. Residues 44–77 (VDSVQASQKRIEERHREMENAIKSVQIDLLKLSQ) are a coiled coil. Residues Ser172 and Ser173 each carry the phosphoserine modification. Residues 202–226 (FSKENMQKTRQNLDKKVNRIRTRIV) are a coiled coil. Residues 231–256 (RERLRQSGERLRQSGERLRQSGERFK) are compositionally biased toward basic and acidic residues. Disordered regions lie at residues 231-283 (RERL…RTVA) and 311-339 (SDEL…TPEP). A Phosphotyrosine modification is found at Tyr326. Thr336 carries the post-translational modification Phosphothreonine. Ser355 carries the post-translational modification Phosphoserine.

Belongs to the CAVIN family. As to quaternary structure, component of the CAVIN complex composed of CAVIN1, CAVIN2, CAVIN3 and CAVIN4. Interacts with CAVIN1, ADRA1A and ADRA1B. Interacts with CAVIN2; this augments the transactivation of NPPA. Interacts with CAV3. Interacts with MAPK1 and MAPK3.

The protein resides in the cytoplasm. Its subcellular location is the myofibril. It localises to the sarcomere. The protein localises to the cytosol. It is found in the cell membrane. The protein resides in the sarcolemma. Its subcellular location is the membrane. It localises to the caveola. Modulates the morphology of formed caveolae in cardiomyocytes, but is not required for caveolar formation. Facilitates the recruitment of MAPK1/3 to caveolae within cardiomyocytes and regulates alpha-1 adrenergic receptor-induced hypertrophic responses in cardiomyocytes through MAPK1/3 activation. Contributes to proper membrane localization and stabilization of caveolin-3 (CAV3) in cardiomyocytes. Induces RHOA activation and activates NPPA transcription and myofibrillar organization through the Rho/ROCK signaling pathway. The chain is Caveolae-associated protein 4 from Homo sapiens (Human).